A 381-amino-acid chain; its full sequence is Dual specificity protein phosphatase 6 (381 aa).

The 119-residue stretch at 30-148 (GNERLLLMDC…FQAEFALHCE (119 aa)) folds into the Rhodanese domain. The disordered stretch occupies residues 176 to 203 (SSSDIESDLDRDPNSATDSDGSPLSNSQ). A compositionally biased stretch (polar residues) spans 189-203 (NSATDSDGSPLSNSQ). Positions 206-349 (FPVEILPFLY…LLDFERTLGL (144 aa)) constitute a Tyrosine-protein phosphatase domain. Cys-293 (phosphocysteine intermediate) is an active-site residue.

The protein belongs to the protein-tyrosine phosphatase family. Non-receptor class dual specificity subfamily. Interacts with MAPK1/ERK2. Ubiquitinated by the SCF(FBXO31) complex, leading to its proteasomal degradation.

It localises to the cytoplasm. The enzyme catalyses O-phospho-L-tyrosyl-[protein] + H2O = L-tyrosyl-[protein] + phosphate. It carries out the reaction O-phospho-L-seryl-[protein] + H2O = L-seryl-[protein] + phosphate. It catalyses the reaction O-phospho-L-threonyl-[protein] + H2O = L-threonyl-[protein] + phosphate. In terms of biological role, dual specificity protein phosphatase, which mediates dephosphorylation and inactivation of MAP kinases. Has a specificity for the ERK family. Plays an important role in alleviating acute postoperative pain. Necessary for the normal dephosphorylation of the long-lasting phosphorylated forms of spinal MAPK1/3 and MAP kinase p38 induced by peripheral surgery, which drives the resolution of acute postoperative allodynia. Also important for dephosphorylation of MAPK1/3 in local wound tissue, which further contributes to resolution of acute pain. The protein is Dual specificity protein phosphatase 6 (Dusp6) of Mus musculus (Mouse).